Here is a 497-residue protein sequence, read N- to C-terminus: Signal recognition particle subunit SRP54 2 (497 aa).

Positions 1-295 (MVLAQLGGSI…DVKPFVSRLL (295 aa)) are G-domain. Residues 108–115 (GLQGSGKT), 190–194 (DTSGR), and 248–251 (TKLD) contribute to the GTP site. The M-domain stretch occupies residues 296 to 497 (GMGDLSGLMD…MLGGMGLGGD (202 aa)).

The protein belongs to the GTP-binding SRP family. SRP54 subfamily. In terms of assembly, component of a signal recognition particle (SRP) complex that consists of a 7SL RNA molecule of 300 nucleotides and six protein subunits: SRP72, SRP68, SRP54, SRP19, SRP14 and SRP9.

The protein resides in the cytoplasm. It localises to the endoplasmic reticulum. The catalysed reaction is GTP + H2O = GDP + phosphate + H(+). Its function is as follows. Component of the signal recognition particle (SRP) complex, a ribonucleoprotein complex that mediates the cotranslational targeting of secretory and membrane proteins to the endoplasmic reticulum (ER). As part of the SRP complex, associates with the SRP receptor (SR) component SRPRA to target secretory proteins to the endoplasmic reticulum membrane. Binds to the signal sequence of presecretory proteins when they emerge from the ribosomes. Displays basal GTPase activity, and stimulates reciprocal GTPase activation of the SR subunit SRPRA. Forms a guanosine 5'-triphosphate (GTP)-dependent complex with the SR subunit SRPRA. SR compaction and GTPase mediated rearrangement of SR drive SRP-mediated cotranslational protein translocation into the ER. Requires the presence of SRP9/SRP14 and/or SRP19 to stably interact with RNA. This Hordeum vulgare (Barley) protein is Signal recognition particle subunit SRP54 2 (SRP54-2).